Here is a 235-residue protein sequence, read N- to C-terminus: Sperm annulus positionning complex subunit Chibby3 (235 aa).

Residues 1-41 form a disordered region; that stretch reads MADSKMKWGQAWDSSLGTATTSSSSATGSPSPFQNIRVPDT. Residues 14–32 show a composition bias toward low complexity; the sequence is SSLGTATTSSSSATGSPSP. The tract at residues 167-181 is leucine-zipper; mediates homodimerization; the sequence is LLEENNYLKLQQELL.

This sequence belongs to the chibby family. In terms of assembly, homodimer. Interacts with CIBAR1 (via BAR-like domain); both proteins form a ninefold symmetric structure at the flagellar base; are recruited to the annulus in a mutually dependent manner and regulate annulus positionning. Testis-specific.

The protein localises to the cell projection. It is found in the cilium. The protein resides in the flagellum. Plays a key role in the correct positioning of the annulus, a septin-based ring strucure in the sperm flagellum, serving both as a physical barrier and a membrane diffusion barrier that separates the midpiece (MP) from the principal piece (PP). This positioning is essential for proper sperm motility and function. Interacts with CIBAR1 to form a complex which localizes to the curved membrane region of the flagellar pocket. By doing so, may provide stability and rigidity to the periannular membrane to prevent membrane deformation. This function is crucial for halting annulus migration at the proximal end of the fibrous sheath-containing PP. The chain is Sperm annulus positionning complex subunit Chibby3 (Cby3) from Mus musculus (Mouse).